Here is a 367-residue protein sequence, read N- to C-terminus: Alginate lyase (367 aa).

The first 24 residues, 1–24 (MTAFKRIFSPALLVLALYGGAAHA), serve as a signal peptide directing secretion. Substrate is bound by residues 63–64 (SK), 136–137 (HT), and Tyr-254.

The protein belongs to the polysaccharide lyase 5 family.

The protein localises to the periplasm. The enzyme catalyses Eliminative cleavage of alginate to give oligosaccharides with 4-deoxy-alpha-L-erythro-hex-4-enuronosyl groups at their non-reducing ends and beta-D-mannuronate at their reducing end.. Its function is as follows. Catalyzes the depolymerization of alginate by cleaving the beta-1,4 glycosidic bond between two adjacent sugar residues via a beta-elimination mechanism. May serve to degrade mislocalized alginate that is trapped in the periplasmic space. This Pseudomonas putida (strain W619) protein is Alginate lyase.